The primary structure comprises 321 residues: Ferredoxin--NADP reductase (321 aa).

The FAD site is built by D28, Q36, Y41, A81, F115, D274, and S315.

This sequence belongs to the ferredoxin--NADP reductase type 2 family. Homodimer. The cofactor is FAD.

The enzyme catalyses 2 reduced [2Fe-2S]-[ferredoxin] + NADP(+) + H(+) = 2 oxidized [2Fe-2S]-[ferredoxin] + NADPH. The chain is Ferredoxin--NADP reductase from Frankia casuarinae (strain DSM 45818 / CECT 9043 / HFP020203 / CcI3).